The primary structure comprises 213 residues: MSLGILGTKLGMTQIFDNETGTAIPVTVVQAGPCTVTQIKTSETDGYTSVQIGYGDVKEKNLTKPQLGHLKKADAAPLRHLKEYRLDDVSGYELGQAITANIFEAGQVVDVSGNTIGRGFAGYQKRHNFKRGNMTHGSKNHRLPGSTGAGTTPGRVYPGKRMAGRYGGTKITVRKLEVVRVDEEKNLLLIKGAIPGKAGNLLSIAPSNIVGQK.

The disordered stretch occupies residues 130-161 (KRGNMTHGSKNHRLPGSTGAGTTPGRVYPGKR).

The protein belongs to the universal ribosomal protein uL3 family. Part of the 50S ribosomal subunit. Forms a cluster with proteins L14 and L19.

In terms of biological role, one of the primary rRNA binding proteins, it binds directly near the 3'-end of the 23S rRNA, where it nucleates assembly of the 50S subunit. The sequence is that of Large ribosomal subunit protein uL3 from Picosynechococcus sp. (strain ATCC 27264 / PCC 7002 / PR-6) (Agmenellum quadruplicatum).